The primary structure comprises 336 residues: Holliday junction branch migration complex subunit RuvB (336 aa).

The interval 4–184 is large ATPase domain (RuvB-L); it reads ADRLIQPQVI…FGIPLRLEFY (181 aa). ATP-binding positions include Arg24, Gly65, Lys68, Thr69, Thr70, 131-133, Arg174, Tyr184, and Arg221; that span reads EDY. Thr69 contacts Mg(2+). A small ATPAse domain (RuvB-S) region spans residues 185 to 255; it reads NIKDLSTIVI…VAELALDMLD (71 aa). The tract at residues 258-336 is head domain (RuvB-H); sequence AEGFDYMDRK…HFNLIQPEAK (79 aa). DNA contacts are provided by Arg294, Arg313, and Arg318.

It belongs to the RuvB family. Homohexamer. Forms an RuvA(8)-RuvB(12)-Holliday junction (HJ) complex. HJ DNA is sandwiched between 2 RuvA tetramers; dsDNA enters through RuvA and exits via RuvB. An RuvB hexamer assembles on each DNA strand where it exits the tetramer. Each RuvB hexamer is contacted by two RuvA subunits (via domain III) on 2 adjacent RuvB subunits; this complex drives branch migration. In the full resolvosome a probable DNA-RuvA(4)-RuvB(12)-RuvC(2) complex forms which resolves the HJ.

The protein resides in the cytoplasm. The catalysed reaction is ATP + H2O = ADP + phosphate + H(+). Functionally, the RuvA-RuvB-RuvC complex processes Holliday junction (HJ) DNA during genetic recombination and DNA repair, while the RuvA-RuvB complex plays an important role in the rescue of blocked DNA replication forks via replication fork reversal (RFR). RuvA specifically binds to HJ cruciform DNA, conferring on it an open structure. The RuvB hexamer acts as an ATP-dependent pump, pulling dsDNA into and through the RuvAB complex. RuvB forms 2 homohexamers on either side of HJ DNA bound by 1 or 2 RuvA tetramers; 4 subunits per hexamer contact DNA at a time. Coordinated motions by a converter formed by DNA-disengaged RuvB subunits stimulates ATP hydrolysis and nucleotide exchange. Immobilization of the converter enables RuvB to convert the ATP-contained energy into a lever motion, pulling 2 nucleotides of DNA out of the RuvA tetramer per ATP hydrolyzed, thus driving DNA branch migration. The RuvB motors rotate together with the DNA substrate, which together with the progressing nucleotide cycle form the mechanistic basis for DNA recombination by continuous HJ branch migration. Branch migration allows RuvC to scan DNA until it finds its consensus sequence, where it cleaves and resolves cruciform DNA. The polypeptide is Holliday junction branch migration complex subunit RuvB (Shewanella piezotolerans (strain WP3 / JCM 13877)).